Here is a 633-residue protein sequence, read N- to C-terminus: Pollen receptor-like kinase 3 (633 aa).

The signal sequence occupies residues M1 to S19. Residues N22 and N37 are each glycosylated (N-linked (GlcNAc...) asparagine). An intrachain disulfide couples C53 to C62. LRR repeat units follow at residues L90 to G115, K117 to E137, T138 to L162, A163 to N186, and V188 to R210. Residue N123 is glycosylated (N-linked (GlcNAc...) asparagine). C224 and C232 form a disulfide bridge. A glycan (N-linked (GlcNAc...) asparagine) is linked at N246. The helical transmembrane segment at A249–I269 threads the bilayer. Positions V294 to N314 are enriched in basic and acidic residues. The segment at V294 to G339 is disordered. A compositionally biased stretch (gly residues) spans K328 to M338. A Protein kinase domain is found at K358–L633. ATP is bound by residues L364 to A372 and K386. S438 is modified (phosphoserine). T458 is subject to Phosphothreonine. S535 carries the phosphoserine modification.

It belongs to the protein kinase superfamily. Ser/Thr protein kinase family. As to quaternary structure, interacts in vitro with ROPGEF1 (via PRONE domain). Interacts with PRK6. As to expression, expressed in pollen and/or in flowers, but not in leaves.

It is found in the membrane. The enzyme catalyses L-seryl-[protein] + ATP = O-phospho-L-seryl-[protein] + ADP + H(+). It catalyses the reaction L-threonyl-[protein] + ATP = O-phospho-L-threonyl-[protein] + ADP + H(+). Its activity is regulated as follows. The phosphorylation activity is calcium-independent. Its function is as follows. Receptor-like kinase involved in the control of pollen germination and pollen tube polar growth. Can phosphorylate ROPGEF1 in vitro. The polypeptide is Pollen receptor-like kinase 3 (Arabidopsis thaliana (Mouse-ear cress)).